Reading from the N-terminus, the 1072-residue chain is DNA-directed RNA polymerase subunit beta (1072 aa).

The protein belongs to the RNA polymerase beta chain family. In terms of assembly, in plastids the minimal PEP RNA polymerase catalytic core is composed of four subunits: alpha, beta, beta', and beta''. When a (nuclear-encoded) sigma factor is associated with the core the holoenzyme is formed, which can initiate transcription.

It is found in the plastid. Its subcellular location is the chloroplast. The enzyme catalyses RNA(n) + a ribonucleoside 5'-triphosphate = RNA(n+1) + diphosphate. Functionally, DNA-dependent RNA polymerase catalyzes the transcription of DNA into RNA using the four ribonucleoside triphosphates as substrates. This chain is DNA-directed RNA polymerase subunit beta, found in Arabis hirsuta (Hairy rock-cress).